The primary structure comprises 50 residues: Large ribosomal subunit protein eL39 (50 aa).

This sequence belongs to the eukaryotic ribosomal protein eL39 family.

This chain is Large ribosomal subunit protein eL39 (rpl39e), found in Archaeoglobus fulgidus (strain ATCC 49558 / DSM 4304 / JCM 9628 / NBRC 100126 / VC-16).